Reading from the N-terminus, the 124-residue chain is UPF0738 protein ABC2521 (124 aa).

This sequence belongs to the UPF0738 family.

This is UPF0738 protein ABC2521 from Shouchella clausii (strain KSM-K16) (Alkalihalobacillus clausii).